The following is a 453-amino-acid chain: UDP-glycosyltransferase 79B3 (453 aa).

UDP-alpha-D-glucose contacts are provided by residues Ser-266, 325 to 327 (VQQ), 342 to 350 (HCGFGSMWE), and 364 to 367 (LGDQ).

The protein belongs to the UDP-glycosyltransferase family.

The polypeptide is UDP-glycosyltransferase 79B3 (UGT79B3) (Arabidopsis thaliana (Mouse-ear cress)).